The primary structure comprises 146 residues: Ninjurin-1 (146 aa).

A disordered region spans residues 1–33 (MASEAMELNGGVNRRDDPGARPQQGRMSRNTPL). The Extracellular segment spans residues 1 to 75 (MASEAMELNG…ELGPSFSFYI (75 aa)). The interval 37–66 (HYANKKSAAESMLDIALLMANASQLKTVLE) is required to induce plasma membrane rupture. Residues 41-52 (KKSAAESMLDIA) form a helix alpha1 region. The segment at 55–71 (MANASQLKTVLELGPSF) is helix alpha2. N57 carries N-linked (GlcNAc...) asparagine glycosylation. A helical membrane pass occupies residues 76-100 (PLITLISISLTLQIIVGILLIFIVK). Residues 101–110 (WNLNDSSKHY) are Cytoplasmic-facing. The helical transmembrane segment at 111–135 (ILNLLENIVTALVFIVVVVNVFITA) threads the bilayer. Topologically, residues 136 to 146 (FGVQRPDDKTS) are extracellular.

Belongs to the ninjurin family. Homooligomer; in response to death stimuli, homooligomerizes into long, highly branched filaments and large, ring-shaped structures in the membrane. In terms of assembly, homodimer; in absence of death stimuli, forms an inactive homodimer. Homooligomer; in response to death stimuli, homooligomerizes into long, highly branched filaments and large, ring-shaped structures in the membrane.

It localises to the cell membrane. The protein resides in the synaptic cell membrane. Its activity is regulated as follows. In normal conditions, NINJ1 is inactivated. In response to death stimuli, homooligomerizes and disrupts membrane integrity by introducing the hydrophilic faces of alpha1 and alpha2 helices into the hydrophobic membrane. Homooligomerization and ability to mediate plasma membrane rupture is inhibited by glycine; it is unclear whether glycine directly or indirectly inhibits homooligomerization. In response to death stimuli, homooligomerizes and disrupts membrane integrity by introducing the hydrophilic faces of alpha1 and alpha2 helices into the hydrophobic membrane. Homooligomerization and ability to mediate plasma membrane rupture is inhibited by glycine; it is unclear whether glycine directly or indirectly inhibits homooligomerization. In normal conditions, NINJ1 is autoinhibited via formation of a homodimer: in the inactive homodimer, the alpha1 and alpha2 helices (residues 41-71) form a single transmembrane region without a kink, in which hydrophilic faces of alpha1 and alpha2 helices are sequestered. In terms of biological role, effector of various programmed cell death, such as pyroptosis and necroptosis, which mediates plasma membrane rupture (cytolysis). Oligomerizes in response to death stimuli and forms ring-like structures on the plasma membrane: acts by cutting and shedding membrane disks, like a cookie cutter, leading to membrane damage and loss that cannot be repaired by the cell. Plasma membrane rupture leads to release intracellular molecules named damage-associated molecular patterns (DAMPs) that propagate the inflammatory response. Mechanistically, mediates plasma membrane rupture by introducing hydrophilic faces of 2 alpha helices into the hydrophobic membrane. Induces plasma membrane rupture downstream of Gasdermin (GSDMA, GSDMB, GSDMC, GSDMD, or GSDME) or MLKL during pyroptosis or necroptosis, respectively. Also acts as an effector of PANoptosis and ferroptosis. Induces plasma membrane rupture in response to cell swelling caused by osmotic stress. Acts as a regulator of Toll-like receptor 4 (TLR4) signaling triggered by lipopolysaccharide (LPS) during systemic inflammation; directly binds LPS. Involved in leukocyte migration during inflammation by promoting transendothelial migration of macrophages via homotypic binding. Promotes the migration of monocytes across the brain endothelium to central nervous system inflammatory lesions. Also acts as a homophilic transmembrane adhesion molecule involved in various processes such as axonal growth, cell chemotaxis and angiogenesis. Promotes cell adhesion by mediating homophilic interactions via its extracellular N-terminal adhesion motif (N-NAM). Also involved in striated muscle growth and differentiation. The protein is Ninjurin-1 of Danio rerio (Zebrafish).